Reading from the N-terminus, the 154-residue chain is Myoglobin (154 aa).

A Globin domain is found at Gly-2–Lys-148. Phosphoserine is present on Ser-4. His-65 is a binding site for nitrite. His-65 contacts O2. A Phosphothreonine modification is found at Thr-68. His-94 is a heme b binding site.

The protein belongs to the globin family. As to quaternary structure, monomeric.

The protein resides in the cytoplasm. It localises to the sarcoplasm. It catalyses the reaction Fe(III)-heme b-[protein] + nitric oxide + H2O = Fe(II)-heme b-[protein] + nitrite + 2 H(+). The enzyme catalyses H2O2 + AH2 = A + 2 H2O. In terms of biological role, monomeric heme protein which primary function is to store oxygen and facilitate its diffusion within muscle tissues. Reversibly binds oxygen through a pentacoordinated heme iron and enables its timely and efficient release as needed during periods of heightened demand. Depending on the oxidative conditions of tissues and cells, and in addition to its ability to bind oxygen, it also has a nitrite reductase activity whereby it regulates the production of bioactive nitric oxide. Under stress conditions, like hypoxia and anoxia, it also protects cells against reactive oxygen species thanks to its pseudoperoxidase activity. The polypeptide is Myoglobin (MB) (Lagostomus maximus (Plains viscacha)).